We begin with the raw amino-acid sequence, 505 residues long: Acetylcholine receptor subunit beta (505 aa).

An N-terminal signal peptide occupies residues 1–24 (MTPGALLLLLLGVLGAHLAPGARG). The Extracellular segment spans residues 25 to 245 (SEAEGRLREK…VTFYLIIRRK (221 aa)). A disulfide bridge connects residues cysteine 152 and cysteine 166. N-linked (GlcNAc...) asparagine glycosylation occurs at asparagine 165. 3 consecutive transmembrane segments (helical) span residues 246–270 (PLFY…VFYL), 278–295 (MGLS…LLLL), and 312–333 (YLMF…VLNL). The Cytoplasmic portion of the chain corresponds to 334-473 (HHRSPHTHQM…WQFVAMVVDR (140 aa)). A disordered region spans residues 365–391 (KPERDQMQEPPSIAPRDSPGSGWGRGT). Tyrosine 394 carries the phosphotyrosine; by Tyr-kinases modification. The chain crosses the membrane as a helical span at residues 474–492 (LFLWTFIIFTSVGTLVIFL).

It belongs to the ligand-gated ion channel (TC 1.A.9) family. Acetylcholine receptor (TC 1.A.9.1) subfamily. Beta-1/CHRNB1 sub-subfamily. In terms of assembly, pentamer of two alpha chains, and one each of the beta, delta, and gamma (in immature muscle) or epsilon (in mature muscle) chains. The muscle heteropentamer composed of alpha-1, beta-1, delta, epsilon subunits interacts with the alpha-conotoxin ImII.

It localises to the postsynaptic cell membrane. The protein localises to the cell membrane. The catalysed reaction is K(+)(in) = K(+)(out). It catalyses the reaction Na(+)(in) = Na(+)(out). Functionally, after binding acetylcholine, the AChR responds by an extensive change in conformation that affects all subunits and leads to opening of an ion-conducting channel across the plasma membrane. This Bos taurus (Bovine) protein is Acetylcholine receptor subunit beta (CHRNB1).